We begin with the raw amino-acid sequence, 267 residues long: GTP cyclohydrolase FolE2 (267 aa).

This sequence belongs to the GTP cyclohydrolase IV family.

The catalysed reaction is GTP + H2O = 7,8-dihydroneopterin 3'-triphosphate + formate + H(+). It functions in the pathway cofactor biosynthesis; 7,8-dihydroneopterin triphosphate biosynthesis; 7,8-dihydroneopterin triphosphate from GTP: step 1/1. In terms of biological role, converts GTP to 7,8-dihydroneopterin triphosphate. The protein is GTP cyclohydrolase FolE2 of Nitrosococcus oceani (strain ATCC 19707 / BCRC 17464 / JCM 30415 / NCIMB 11848 / C-107).